Here is a 251-residue protein sequence, read N- to C-terminus: Ubiquinone/menaquinone biosynthesis C-methyltransferase UbiE (251 aa).

S-adenosyl-L-methionine-binding positions include threonine 74, aspartate 95, 123–124 (NA), and serine 140.

It belongs to the class I-like SAM-binding methyltransferase superfamily. MenG/UbiE family.

The catalysed reaction is a 2-demethylmenaquinol + S-adenosyl-L-methionine = a menaquinol + S-adenosyl-L-homocysteine + H(+). It catalyses the reaction a 2-methoxy-6-(all-trans-polyprenyl)benzene-1,4-diol + S-adenosyl-L-methionine = a 5-methoxy-2-methyl-3-(all-trans-polyprenyl)benzene-1,4-diol + S-adenosyl-L-homocysteine + H(+). It participates in quinol/quinone metabolism; menaquinone biosynthesis; menaquinol from 1,4-dihydroxy-2-naphthoate: step 2/2. Its pathway is cofactor biosynthesis; ubiquinone biosynthesis. Its function is as follows. Methyltransferase required for the conversion of demethylmenaquinol (DMKH2) to menaquinol (MKH2) and the conversion of 2-polyprenyl-6-methoxy-1,4-benzoquinol (DDMQH2) to 2-polyprenyl-3-methyl-6-methoxy-1,4-benzoquinol (DMQH2). The sequence is that of Ubiquinone/menaquinone biosynthesis C-methyltransferase UbiE from Salmonella paratyphi A (strain AKU_12601).